The primary structure comprises 329 residues: Phytochromobilin:ferredoxin oxidoreductase, chloroplastic (329 aa).

A chloroplast-targeting transit peptide spans Met1–Arg45.

The protein belongs to the HY2 family.

It is found in the plastid. The protein resides in the chloroplast. It carries out the reaction (3Z)-phytochromobilin + 2 oxidized [2Fe-2S]-[ferredoxin] = biliverdin IXalpha + 2 reduced [2Fe-2S]-[ferredoxin] + 2 H(+). Its function is as follows. Catalyzes the two-electron reduction of biliverdin IX-alpha to the tetrapyrrole chromophore phytochromobilin (PPhiB). This chain is Phytochromobilin:ferredoxin oxidoreductase, chloroplastic, found in Arabidopsis thaliana (Mouse-ear cress).